The following is a 201-amino-acid chain: Protease (201 aa).

Active-site residues include histidine 55, aspartate 72, and cysteine 122.

The protein belongs to the peptidase C5 family. In terms of assembly, interacts with protease cofactor pVI-C; this interaction is necessary for protease activation.

It localises to the virion. The protein resides in the host nucleus. It catalyses the reaction Cleaves proteins of the adenovirus and its host cell at two consensus sites: -Yaa-Xaa-Gly-Gly-|-Xaa- and -Yaa-Xaa-Gly-Xaa-|-Gly- (in which Yaa is Met, Ile or Leu, and Xaa is any amino acid).. Its activity is regulated as follows. Requires DNA and protease cofactor for maximal activation. Inside nascent virions, becomes partially activated by binding to the viral DNA, allowing it to cleave the cofactor that binds to the protease and fully activates it. Actin, like the viral protease cofactor, seems to act as a cofactor in the cleavage of cytokeratin 18 and of actin itself. In terms of biological role, cleaves viral precursor proteins (pTP, pIIIa, pVI, pVII, pVIII, and pX) inside newly assembled particles giving rise to mature virions. Protease complexed to its cofactor slides along the viral DNA to specifically locate and cleave the viral precursors. Mature virions have a weakened organization compared to the unmature virions, thereby facilitating subsequent uncoating. Without maturation, the particle lacks infectivity and is unable to uncoat. Late in adenovirus infection, in the cytoplasm, may participate in the cytoskeleton destruction. Cleaves host cell cytoskeletal keratins K7 and K18. The chain is Protease from Pantherophis guttatus (Corn snake).